Consider the following 117-residue polypeptide: Large ribosomal subunit protein bL20 (117 aa).

The protein belongs to the bacterial ribosomal protein bL20 family.

Its function is as follows. Binds directly to 23S ribosomal RNA and is necessary for the in vitro assembly process of the 50S ribosomal subunit. It is not involved in the protein synthesizing functions of that subunit. This chain is Large ribosomal subunit protein bL20, found in Helicobacter hepaticus (strain ATCC 51449 / 3B1).